The chain runs to 149 residues: 3-dehydroquinate dehydratase (149 aa).

The active-site Proton acceptor is the tyrosine 22. Positions 74, 80, and 87 each coordinate substrate. Histidine 100 (proton donor) is an active-site residue. Residues 101–102 (MS) and arginine 111 contribute to the substrate site.

The protein belongs to the type-II 3-dehydroquinase family. In terms of assembly, homododecamer.

It carries out the reaction 3-dehydroquinate = 3-dehydroshikimate + H2O. The protein operates within metabolic intermediate biosynthesis; chorismate biosynthesis; chorismate from D-erythrose 4-phosphate and phosphoenolpyruvate: step 3/7. In terms of biological role, catalyzes a trans-dehydration via an enolate intermediate. In Leptothrix cholodnii (strain ATCC 51168 / LMG 8142 / SP-6) (Leptothrix discophora (strain SP-6)), this protein is 3-dehydroquinate dehydratase.